The chain runs to 318 residues: uncharacterized protein (318 aa).

This sequence to E.coli YfaT and P.aeruginosa PA4490.

This is an uncharacterized protein from Thermotoga maritima (strain ATCC 43589 / DSM 3109 / JCM 10099 / NBRC 100826 / MSB8).